We begin with the raw amino-acid sequence, 115 residues long: NADH-ubiquinone oxidoreductase chain 3 (115 aa).

3 consecutive transmembrane segments (helical) span residues 3–23 (LMLTLLTNTLLASLLVLIAFW), 55–75 (FFLVAITFLLFDLEIALLLPL), and 84–104 (LNTMLIMALILISLLAISLAY).

This sequence belongs to the complex I subunit 3 family. Core subunit of respiratory chain NADH dehydrogenase (Complex I) which is composed of 45 different subunits. Interacts with TMEM186. Interacts with TMEM242.

It is found in the mitochondrion inner membrane. It catalyses the reaction a ubiquinone + NADH + 5 H(+)(in) = a ubiquinol + NAD(+) + 4 H(+)(out). Its function is as follows. Core subunit of the mitochondrial membrane respiratory chain NADH dehydrogenase (Complex I) which catalyzes electron transfer from NADH through the respiratory chain, using ubiquinone as an electron acceptor. Essential for the catalytic activity of complex I. The polypeptide is NADH-ubiquinone oxidoreductase chain 3 (Equus asinus (Donkey)).